We begin with the raw amino-acid sequence, 192 residues long: Pyridoxal 5'-phosphate synthase subunit PdxT (192 aa).

Residue 47–49 (GES) participates in L-glutamine binding. Catalysis depends on cysteine 78, which acts as the Nucleophile. Residues arginine 105 and 139-140 (IR) contribute to the L-glutamine site. Residues histidine 175 and glutamate 177 each act as charge relay system in the active site.

Belongs to the glutaminase PdxT/SNO family. In terms of assembly, in the presence of PdxS, forms a dodecamer of heterodimers. Only shows activity in the heterodimer.

The catalysed reaction is aldehydo-D-ribose 5-phosphate + D-glyceraldehyde 3-phosphate + L-glutamine = pyridoxal 5'-phosphate + L-glutamate + phosphate + 3 H2O + H(+). It carries out the reaction L-glutamine + H2O = L-glutamate + NH4(+). The protein operates within cofactor biosynthesis; pyridoxal 5'-phosphate biosynthesis. In terms of biological role, catalyzes the hydrolysis of glutamine to glutamate and ammonia as part of the biosynthesis of pyridoxal 5'-phosphate. The resulting ammonia molecule is channeled to the active site of PdxS. This is Pyridoxal 5'-phosphate synthase subunit PdxT from Solibacter usitatus (strain Ellin6076).